Reading from the N-terminus, the 198-residue chain is dTTP/UTP pyrophosphatase (198 aa).

The active-site Proton acceptor is Asp75.

This sequence belongs to the Maf family. YhdE subfamily. A divalent metal cation is required as a cofactor.

The protein localises to the cytoplasm. The enzyme catalyses dTTP + H2O = dTMP + diphosphate + H(+). It catalyses the reaction UTP + H2O = UMP + diphosphate + H(+). Nucleoside triphosphate pyrophosphatase that hydrolyzes dTTP and UTP. May have a dual role in cell division arrest and in preventing the incorporation of modified nucleotides into cellular nucleic acids. The sequence is that of dTTP/UTP pyrophosphatase from Wolbachia sp. subsp. Drosophila simulans (strain wRi).